The chain runs to 212 residues: Ropporin-1 (212 aa).

One can recognise an RIIa domain in the interval 12 to 43 (PELPELLKQFTKDAIRTQPPDLIQWAAEYFGA). Phosphoserine is present on serine 56. Residues 209 to 212 (VRLE) are interaction with RHPN1.

It belongs to the ropporin family. Homodimer. Interacts with AKAP3. May interact with SPA17. Interacts with RHPN1. Interacts with FSCB; the interaction increases upon spermatozoa capacitation conditions. Interacts with CFAP61. Post-translationally, sumoylated, sumoylation decreases upon spermatozoa capacitation conditions. As to expression, testis-specific. Present in the most inner parts of seminiferous tubules (at protein level).

It localises to the cell projection. Its subcellular location is the cilium. It is found in the flagellum. Important for male fertility. With ROPN1L, involved in fibrous sheath integrity and sperm motility, plays a role in PKA-dependent signaling processes required for spermatozoa capacitation. The sequence is that of Ropporin-1 (Ropn1) from Mus musculus (Mouse).